Consider the following 360-residue polypeptide: Peptide chain release factor 1 (360 aa).

Gln-235 is subject to N5-methylglutamine.

It belongs to the prokaryotic/mitochondrial release factor family. In terms of processing, methylated by PrmC. Methylation increases the termination efficiency of RF1.

The protein localises to the cytoplasm. Functionally, peptide chain release factor 1 directs the termination of translation in response to the peptide chain termination codons UAG and UAA. This Bordetella parapertussis (strain 12822 / ATCC BAA-587 / NCTC 13253) protein is Peptide chain release factor 1.